We begin with the raw amino-acid sequence, 270 residues long: Bis(5'-nucleosyl)-tetraphosphatase, symmetrical (270 aa).

Belongs to the Ap4A hydrolase family.

The enzyme catalyses P(1),P(4)-bis(5'-adenosyl) tetraphosphate + H2O = 2 ADP + 2 H(+). Hydrolyzes diadenosine 5',5'''-P1,P4-tetraphosphate to yield ADP. This chain is Bis(5'-nucleosyl)-tetraphosphatase, symmetrical, found in Cellvibrio japonicus (strain Ueda107) (Pseudomonas fluorescens subsp. cellulosa).